The chain runs to 68 residues: Pleurocidin (68 aa).

An N-terminal signal peptide occupies residues 1-22; it reads MKFTATFLMIAIFVLMVEPGEC. Positions 48 to 68 are excised as a propeptide; sequence GDKQELNKRAVDEDPNVIVFE.

Belongs to the pleurocidin family. Goblet cells.

The protein resides in the secreted. Functionally, antimicrobial peptide with potent activity against Gram-positive and Gram-negative bacteria. Activity against E.coli and B.subtilis. Weaker activity against L.mucor, s.marcescens and P.aeruginosa. May play a role in innate host defense. The protein is Pleurocidin (ple2) of Pseudopleuronectes americanus (Winter flounder).